The chain runs to 550 residues: Mitochondrial distribution and morphology protein 12 (550 aa).

An SMP-LTD domain is found at 1–550 (MSIDLNWETV…VYPSYWTFLV (550 aa)). Disordered stretches follow at residues 76–97 (SDLA…DRRR), 196–386 (GHGH…KLRE), and 466–489 (ENEV…GGNG). Positions 83 to 92 (GSEEDEEEIA) are enriched in acidic residues. Positions 270-286 (PPFPPSSTGGPSPPPGL) are enriched in pro residues. Over residues 288–305 (KPHHPHHPHHHHAHHAHP) the composition is skewed to basic residues. Residues 327-344 (PTRDKTTPSHHPDPEDVH) are compositionally biased toward basic and acidic residues. Residues 346–355 (PNTTTTNKQR) are compositionally biased toward polar residues. Residues 356 to 371 (STSPATSSPLATSAQE) are compositionally biased toward low complexity.

This sequence belongs to the MDM12 family. In terms of assembly, component of the ER-mitochondria encounter structure (ERMES) or MDM complex, composed of MMM1, MDM10, MDM12 and MDM34. An MMM1 homodimer associates with one molecule of MDM12 on each side in a pairwise head-to-tail manner, and the SMP-LTD domains of MMM1 and MDM12 generate a continuous hydrophobic tunnel for phospholipid trafficking.

Its subcellular location is the mitochondrion outer membrane. The protein resides in the endoplasmic reticulum membrane. Component of the ERMES/MDM complex, which serves as a molecular tether to connect the endoplasmic reticulum (ER) and mitochondria. Components of this complex are involved in the control of mitochondrial shape and protein biogenesis, and function in nonvesicular lipid trafficking between the ER and mitochondria. MDM12 is required for the interaction of the ER-resident membrane protein MMM1 and the outer mitochondrial membrane-resident beta-barrel protein MDM10. The MDM12-MMM1 subcomplex functions in the major beta-barrel assembly pathway that is responsible for biogenesis of all mitochondrial outer membrane beta-barrel proteins, and acts in a late step after the SAM complex. The MDM10-MDM12-MMM1 subcomplex further acts in the TOM40-specific pathway after the action of the MDM12-MMM1 complex. Essential for establishing and maintaining the structure of mitochondria and maintenance of mtDNA nucleoids. In Podospora anserina (strain S / ATCC MYA-4624 / DSM 980 / FGSC 10383) (Pleurage anserina), this protein is Mitochondrial distribution and morphology protein 12.